A 215-amino-acid chain; its full sequence is Ribosomal RNA small subunit methyltransferase G (215 aa).

S-adenosyl-L-methionine contacts are provided by residues glycine 73, leucine 78, 125-126 (AE), and arginine 140.

Belongs to the methyltransferase superfamily. RNA methyltransferase RsmG family.

Its subcellular location is the cytoplasm. Functionally, specifically methylates the N7 position of guanine in position 518 of 16S rRNA. In Renibacterium salmoninarum (strain ATCC 33209 / DSM 20767 / JCM 11484 / NBRC 15589 / NCIMB 2235), this protein is Ribosomal RNA small subunit methyltransferase G.